The sequence spans 58 residues: INKDCLLPMDVGRCRARHPRYYYNSSSRRCEKFIYGGCRGNANNFITKKECEKVCGVR.

A BPTI/Kunitz inhibitor domain is found at 5–55 (CLLPMDVGRCRARHPRYYYNSSSRRCEKFIYGGCRGNANNFITKKECEKVC). 3 disulfides stabilise this stretch: Cys-5/Cys-55, Cys-14/Cys-38, and Cys-30/Cys-51.

The protein belongs to the venom Kunitz-type family. Sea anemone type 2 potassium channel toxin subfamily.

It localises to the secreted. It is found in the nematocyst. Its function is as follows. Dual-function toxin that inhibits both the serine protease trypsin (Kd&lt;30 nM) and voltage-gated potassium channels Kv1.2/KCNA2 (IC(50)=1100 nM). The sequence is that of KappaPI-actitoxin-Avd3c from Anemonia sulcata (Mediterranean snakelocks sea anemone).